The following is a 331-amino-acid chain: Phosphoribosylformylglycinamidine cyclo-ligase (331 aa).

Belongs to the AIR synthase family.

It localises to the cytoplasm. It carries out the reaction 2-formamido-N(1)-(5-O-phospho-beta-D-ribosyl)acetamidine + ATP = 5-amino-1-(5-phospho-beta-D-ribosyl)imidazole + ADP + phosphate + H(+). It functions in the pathway purine metabolism; IMP biosynthesis via de novo pathway; 5-amino-1-(5-phospho-D-ribosyl)imidazole from N(2)-formyl-N(1)-(5-phospho-D-ribosyl)glycinamide: step 2/2. In Clostridium novyi (strain NT), this protein is Phosphoribosylformylglycinamidine cyclo-ligase.